The primary structure comprises 239 residues: 4-hydroxy-tetrahydrodipicolinate reductase (239 aa).

NAD(+) contacts are provided by residues aspartate 32, 73–75, and 98–101; these read GTT and ASNF. The active-site Proton donor/acceptor is the histidine 133. Residue histidine 134 participates in (S)-2,3,4,5-tetrahydrodipicolinate binding. Residue lysine 137 is the Proton donor of the active site. A (S)-2,3,4,5-tetrahydrodipicolinate-binding site is contributed by 143–144; sequence GT.

This sequence belongs to the DapB family.

It localises to the cytoplasm. The enzyme catalyses (S)-2,3,4,5-tetrahydrodipicolinate + NAD(+) + H2O = (2S,4S)-4-hydroxy-2,3,4,5-tetrahydrodipicolinate + NADH + H(+). It carries out the reaction (S)-2,3,4,5-tetrahydrodipicolinate + NADP(+) + H2O = (2S,4S)-4-hydroxy-2,3,4,5-tetrahydrodipicolinate + NADPH + H(+). It participates in amino-acid biosynthesis; L-lysine biosynthesis via DAP pathway; (S)-tetrahydrodipicolinate from L-aspartate: step 4/4. Catalyzes the conversion of 4-hydroxy-tetrahydrodipicolinate (HTPA) to tetrahydrodipicolinate. The sequence is that of 4-hydroxy-tetrahydrodipicolinate reductase from Christiangramia forsetii (strain DSM 17595 / CGMCC 1.15422 / KT0803) (Gramella forsetii).